We begin with the raw amino-acid sequence, 475 residues long: Doublecortin domain-containing protein 2 (475 aa).

2 consecutive Doublecortin domains span residues 17–100 (KSVL…LNYL) and 139–221 (CTIF…LPYS). The segment at 234–475 (YGQKASSLPP…EANKASSAVA (242 aa)) is disordered. Residues 252 to 272 (GSGNYRQSKSTIGSSDNSSPQ) show a composition bias toward polar residues. Position 270 is a phosphoserine (S270). The span at 353-365 (EKTSKDANQKEDF) shows a compositional bias: basic and acidic residues. Acidic residues predominate over residues 407 to 425 (TDEENGEELDQVAEELQPT).

Interacts with DVL1, DVL2 and DVL3. Expressed in hair cells of the inner ear.

It is found in the cell projection. Its subcellular location is the cilium. It localises to the cytoplasm. The protein resides in the cytoskeleton. The protein localises to the cilium axoneme. It is found in the kinocilium. Functionally, protein that plays a role in the inhibition of canonical Wnt signaling pathway. May be involved in neuronal migration during development of the cerebral neocortex. Involved in the control of ciliogenesis and ciliary length. This chain is Doublecortin domain-containing protein 2 (Dcdc2), found in Mus musculus (Mouse).